The chain runs to 244 residues: MNPVYSPVQPGAPYGNPKNMAYTGYPTAYPAAAPAYNPSLYPTNSPSYAPEFQFLHSAYATLLMKQAWPQNSSSCGTEGTFHLPVDTGTENRTYQASSAAFRYTAGTPYKVPPTQSNTAPPPYSPSPNPYQTAMYPIRSAYPQQNLYAQGAYYTQPVYAAQPHVIHHTTVVQPNSIPSAIYPAPVAAPRTNGVAMGMVAGTTMAMSAGTLLTTPQHTAIGAHPVSMPTYRAQGTPAYSYVPPHW.

Met1 carries the N-acetylmethionine modification. At Arg102 the chain carries Asymmetric dimethylarginine. Residues 107–126 (TPYKVPPTQSNTAPPPYSPS) are disordered.

This sequence belongs to the FAM168 family. Interacts with POLB. Interacts with AKT1 and MT1X. May interact with FAM168B.

Its function is as follows. In cancer context, protects cells from induced-DNA damage and apoptosis. Acts, at least in part, through PI3K/AKT/NFKB signaling pathway and by preventing POLB degradation. Decreases POLB ubiquitation and stabilizes its protein levels. The sequence is that of Protein FAM168A (Fam168a) from Mus musculus (Mouse).